Consider the following 303-residue polypeptide: sn-1-specific diacylglycerol lipase ABHD11 (303 aa).

Residues 1–22 (MLRWTRAWTAPYRGIGLSNSSF) constitute a mitochondrion transit peptide. Residues 55–290 (PALVFLHGLF…NAGHWVHSDR (236 aa)) form the AB hydrolase-1 domain. At Lys75 the chain carries N6-succinyllysine. Residues Ser129, Asp225, and His284 each act as charge relay system in the active site.

Belongs to the AB hydrolase superfamily. As to quaternary structure, interacts with OGDH and DLST; this interaction maintains the functional lipoylation of the 2-oxoglutarate dehydrogenase complex. Phosphorylated.

It localises to the mitochondrion. The protein localises to the mitochondrion matrix. It catalyses the reaction a 1,3-diacyl-sn-glycerol + H2O = a 1-acyl-sn-glycerol + a fatty acid + H(+). The enzyme catalyses 1-octadecanoyl-2-(9Z-octadecenoyl)-sn-glycerol + H2O = 2-(9Z-octadecenoyl)-glycerol + octadecanoate + H(+). The catalysed reaction is 1-octadecanoyl-2-(4Z,7Z,10Z,13Z,16Z,19Z-docosahexaenoyl)-sn-glycerol + H2O = 2-(4Z,7Z,10Z,13Z,16Z,19Z-docosahexaenoyl)-glycerol + octadecanoate + H(+). It carries out the reaction a 1,2-diacyl-sn-glycerol + H2O = a 2-acylglycerol + a fatty acid + H(+). It catalyses the reaction 1,2-didecanoylglycerol + H2O = decanoylglycerol + decanoate + H(+). The enzyme catalyses 1-octadecanoyl-2-(5Z,8Z,11Z,14Z-eicosatetraenoyl)-sn-glycerol + H2O = 2-(5Z,8Z,11Z,14Z-eicosatetraenoyl)-glycerol + octadecanoate + H(+). With respect to regulation, the diacylglycerol lipase activity can be modulated by phosphorylation by cAMP-dependent protein kinase. Functionally, catalyzes the hydrolysis of diacylglycerol in vitro and may function as a key regulator in lipid metabolism, namely by regulating the intracellular levels of diacylglycerol. 1,2-diacyl-sn-glycerols are the preferred substrate over 1,3-diacyl-sn-glycerols. The enzyme hydrolyzes stearate in preference to palmitate from the sn-1 position of 1,2-diacyl-sn-glycerols. Maintains the functional lipoylation of the 2-oxoglutarate dehydrogenase complex (OGDHc) through its interaction with the OGDHc by preventing the formation of lipoyl adducts. In addition, is also required for the expansion and differentiation of embryonic stem cells (ESCs). This is sn-1-specific diacylglycerol lipase ABHD11 from Bos taurus (Bovine).